The chain runs to 201 residues: ATP-dependent Clp protease proteolytic subunit (201 aa).

S98 serves as the catalytic Nucleophile. The active site involves H123.

It belongs to the peptidase S14 family. In terms of assembly, fourteen ClpP subunits assemble into 2 heptameric rings which stack back to back to give a disk-like structure with a central cavity, resembling the structure of eukaryotic proteasomes.

It localises to the cytoplasm. The catalysed reaction is Hydrolysis of proteins to small peptides in the presence of ATP and magnesium. alpha-casein is the usual test substrate. In the absence of ATP, only oligopeptides shorter than five residues are hydrolyzed (such as succinyl-Leu-Tyr-|-NHMec, and Leu-Tyr-Leu-|-Tyr-Trp, in which cleavage of the -Tyr-|-Leu- and -Tyr-|-Trp bonds also occurs).. Cleaves peptides in various proteins in a process that requires ATP hydrolysis. Has a chymotrypsin-like activity. Plays a major role in the degradation of misfolded proteins. The chain is ATP-dependent Clp protease proteolytic subunit from Neorickettsia sennetsu (strain ATCC VR-367 / Miyayama) (Ehrlichia sennetsu).